Reading from the N-terminus, the 182-residue chain is Peptidoglycan L,D-endopeptidase MepK (182 aa).

A signal peptide (tat-type signal) is located at residues 1–30 (MDKFDANRRKLLALGGVALGAAILPTPAFA). Residues histidine 133, aspartate 140, and histidine 173 each contribute to the Zn(2+) site.

It belongs to the peptidase M15 family. Requires Zn(2+) as cofactor. Post-translationally, predicted to be exported by the Tat system. The position of the signal peptide cleavage has not been experimentally proven.

The protein operates within cell wall biogenesis; cell wall polysaccharide biosynthesis. Its function is as follows. L,D-endopeptidase that cleaves meso-diaminopimelic acid (mDAP)-mDAP cross-links in peptidoglycan. It works in conjunction with other elongation-specific D,D-endopeptidases to make space for efficient incorporation of nascent peptidoglycan strands into the sacculus and thus enable cell wall expansion. The protein is Peptidoglycan L,D-endopeptidase MepK of Escherichia coli O157:H7.